A 123-amino-acid polypeptide reads, in one-letter code: Large ribosomal subunit protein uL14 (123 aa).

The protein belongs to the universal ribosomal protein uL14 family. In terms of assembly, part of the 50S ribosomal subunit. Forms a cluster with proteins L3 and L19. In the 70S ribosome, L14 and L19 interact and together make contacts with the 16S rRNA in bridges B5 and B8.

Functionally, binds to 23S rRNA. Forms part of two intersubunit bridges in the 70S ribosome. The polypeptide is Large ribosomal subunit protein uL14 (Buchnera aphidicola subsp. Cinara cedri (strain Cc)).